Consider the following 364-residue polypeptide: Aminomethyltransferase (364 aa).

Belongs to the GcvT family. In terms of assembly, the glycine cleavage system is composed of four proteins: P, T, L and H.

It carries out the reaction N(6)-[(R)-S(8)-aminomethyldihydrolipoyl]-L-lysyl-[protein] + (6S)-5,6,7,8-tetrahydrofolate = N(6)-[(R)-dihydrolipoyl]-L-lysyl-[protein] + (6R)-5,10-methylene-5,6,7,8-tetrahydrofolate + NH4(+). In terms of biological role, the glycine cleavage system catalyzes the degradation of glycine. The protein is Aminomethyltransferase of Shewanella baltica (strain OS223).